The chain runs to 279 residues: Large ribosomal subunit protein uL2 (279 aa).

The disordered stretch occupies residues 223-279 (VAMNPVDHPMGGGEGRSSGGHPRSRKGLYAKGGKTRSANKYSKNMIVKKRVNKRLSK). The segment covering 268-279 (IVKKRVNKRLSK) has biased composition (basic residues).

This sequence belongs to the universal ribosomal protein uL2 family. Part of the 50S ribosomal subunit. Forms a bridge to the 30S subunit in the 70S ribosome.

Functionally, one of the primary rRNA binding proteins. Required for association of the 30S and 50S subunits to form the 70S ribosome, for tRNA binding and peptide bond formation. It has been suggested to have peptidyltransferase activity; this is somewhat controversial. Makes several contacts with the 16S rRNA in the 70S ribosome. The protein is Large ribosomal subunit protein uL2 of Cytophaga hutchinsonii (strain ATCC 33406 / DSM 1761 / CIP 103989 / NBRC 15051 / NCIMB 9469 / D465).